Reading from the N-terminus, the 147-residue chain is 3-dehydroquinate dehydratase (147 aa).

Y24 acts as the Proton acceptor in catalysis. Residues N75, H81, and D88 each coordinate substrate. H101 functions as the Proton donor in the catalytic mechanism. Substrate-binding positions include 102–103 and R112; that span reads IS.

The protein belongs to the type-II 3-dehydroquinase family. Homododecamer.

It carries out the reaction 3-dehydroquinate = 3-dehydroshikimate + H2O. The protein operates within metabolic intermediate biosynthesis; chorismate biosynthesis; chorismate from D-erythrose 4-phosphate and phosphoenolpyruvate: step 3/7. In terms of biological role, catalyzes a trans-dehydration via an enolate intermediate. In Cereibacter sphaeroides (strain ATCC 17029 / ATH 2.4.9) (Rhodobacter sphaeroides), this protein is 3-dehydroquinate dehydratase.